We begin with the raw amino-acid sequence, 243 residues long: 1-(5-phosphoribosyl)-5-[(5-phosphoribosylamino)methylideneamino] imidazole-4-carboxamide isomerase (243 aa).

The active-site Proton acceptor is D17. D138 (proton donor) is an active-site residue.

Belongs to the HisA/HisF family.

The protein resides in the cytoplasm. The catalysed reaction is 1-(5-phospho-beta-D-ribosyl)-5-[(5-phospho-beta-D-ribosylamino)methylideneamino]imidazole-4-carboxamide = 5-[(5-phospho-1-deoxy-D-ribulos-1-ylimino)methylamino]-1-(5-phospho-beta-D-ribosyl)imidazole-4-carboxamide. Its pathway is amino-acid biosynthesis; L-histidine biosynthesis; L-histidine from 5-phospho-alpha-D-ribose 1-diphosphate: step 4/9. This chain is 1-(5-phosphoribosyl)-5-[(5-phosphoribosylamino)methylideneamino] imidazole-4-carboxamide isomerase, found in Deinococcus geothermalis (strain DSM 11300 / CIP 105573 / AG-3a).